The chain runs to 388 residues: Glutamine transporter 2 (388 aa).

11 helical membrane-spanning segments follow: residues 5 to 27 (LFGSALILSGTALGAGMLAIPMV), 31 to 53 (FGLFYSTLLMLIICAGTTYAALL), 86 to 106 (LFYLLLFCMLIAYILGAADLI), 121 to 141 (FAQVAFTLFASAFVVCGTQII), 147 to 167 (LLFFFMISMLVLTLIILIPGM), 186 to 206 (TSTILFTSFASMPVIPSLVAY), 218 to 238 (MVILGSIIPLICYLVWLYAVV), 268 to 288 (IILSIFTSLALLTSFLGVAMA), 302 to 322 (IVTYVCTFILPLLGAGLAADQ), 326 to 346 (VLGYAGVILVFLAIFIPLAMV), and 368 to 388 (GGKLALGLTLLFGLLLLISQI).

This sequence belongs to the amino acid/polyamine transporter 2 family.

It is found in the cell inner membrane. In terms of biological role, seems to be involved in glutamine transport. Complements an E.coli glnP deletion mutant. This chain is Glutamine transporter 2, found in Aliivibrio fischeri (strain ATCC 700601 / ES114) (Vibrio fischeri).